The following is a 55-amino-acid chain: Conotoxin Cal22d (55 aa).

A propeptide spanning residues 1-5 (GRPSA) is cleaved from the precursor.

Post-translationally, contains 4 disulfide bonds. As to expression, expressed by the venom duct.

Its subcellular location is the secreted. Its function is as follows. Probable neurotoxin with unknown target. Possibly targets ion channels. This Californiconus californicus (California cone) protein is Conotoxin Cal22d.